A 298-amino-acid polypeptide reads, in one-letter code: Transcription factor BOA (298 aa).

Disordered stretches follow at residues 1 to 26 (MGKE…EYRI), 79 to 143 (LRSS…KRPR), and 206 to 232 (EDPY…GGGS). A compositionally biased stretch (acidic residues) spans 10–20 (YGDDDGEDAGG). Residues 104–113 (DPKKQKKSDG) show a composition bias toward basic and acidic residues. A compositionally biased stretch (acidic residues) spans 122 to 131 (STAEEGDSGP). Positions 138–197 (TSKRPRLVWTPQLHKRFVDVVAHLGIKNAVPKTIMQLMNVEGLTRENVASHLQKYRLYLK) form a DNA-binding region, myb-like GARP. Residues 209–227 (YSSSDQLFSSTPVPPQSFQ) are compositionally biased toward polar residues.

The protein resides in the nucleus. Its function is as follows. Transcription factor that is a critical component of the regulatory circuit of the circadian clock. Binds to specific sites on CCA1 promoter leading to CCA1 activation. Is required for the rhythmic expression of other clock genes such as LHY, GI and APRR1/TOC1. This is Transcription factor BOA (BOA) from Arabidopsis thaliana (Mouse-ear cress).